The sequence spans 545 residues: CTP synthase (545 aa).

An amidoligase domain region spans residues Met1–Leu266. Position 14 (Ser14) interacts with CTP. Ser14 serves as a coordination point for UTP. Residues Ser15 to Ile20 and Asp72 each bind ATP. 2 residues coordinate Mg(2+): Asp72 and Glu140. CTP contacts are provided by residues Asp147–Glu149, Lys187–Gln192, and Lys223. UTP contacts are provided by residues Lys187–Gln192 and Lys223. Lys239–Val241 is a binding site for ATP. In terms of domain architecture, Glutamine amidotransferase type-1 spans Val291–Asn543. Residue Gly352 participates in L-glutamine binding. The active-site Nucleophile; for glutamine hydrolysis is the Cys379. L-glutamine is bound by residues Leu380–Gln383, Glu403, and Arg471. Residues His516 and Glu518 contribute to the active site.

Belongs to the CTP synthase family. As to quaternary structure, homotetramer.

The catalysed reaction is UTP + L-glutamine + ATP + H2O = CTP + L-glutamate + ADP + phosphate + 2 H(+). It catalyses the reaction L-glutamine + H2O = L-glutamate + NH4(+). The enzyme catalyses UTP + NH4(+) + ATP = CTP + ADP + phosphate + 2 H(+). The protein operates within pyrimidine metabolism; CTP biosynthesis via de novo pathway; CTP from UDP: step 2/2. With respect to regulation, allosterically activated by GTP, when glutamine is the substrate; GTP has no effect on the reaction when ammonia is the substrate. The allosteric effector GTP functions by stabilizing the protein conformation that binds the tetrahedral intermediate(s) formed during glutamine hydrolysis. Inhibited by the product CTP, via allosteric rather than competitive inhibition. In terms of biological role, catalyzes the ATP-dependent amination of UTP to CTP with either L-glutamine or ammonia as the source of nitrogen. Regulates intracellular CTP levels through interactions with the four ribonucleotide triphosphates. The chain is CTP synthase from Buchnera aphidicola subsp. Acyrthosiphon pisum (strain 5A).